The chain runs to 304 residues: Large ribosomal subunit protein uL2m (304 aa).

The N-terminal 60 residues, 1-60 (MALCALASALRSLSLASPAITARVPTLLPVGQSNVLLQLPSALALPAHRPVHMSADRSAK), are a transit peptide targeting the mitochondrion.

This sequence belongs to the universal ribosomal protein uL2 family. In terms of assembly, component of the mitochondrial ribosome large subunit (39S) which comprises a 16S rRNA and about 50 distinct proteins.

Its subcellular location is the mitochondrion. The sequence is that of Large ribosomal subunit protein uL2m (Mrpl2) from Rattus norvegicus (Rat).